A 792-amino-acid chain; its full sequence is 5-methyltetrahydropteroyltriglutamate--homocysteine methyltransferase (792 aa).

5-methyltetrahydropteroyltri-L-glutamate-binding positions include 16–19 (RELK) and Lys112. L-homocysteine-binding positions include 432-434 (IGS) and Glu485. Residues 432-434 (IGS) and Glu485 each bind L-methionine. 5-methyltetrahydropteroyltri-L-glutamate contacts are provided by residues 516-517 (RC) and Trp562. Residue Asp600 participates in L-homocysteine binding. L-methionine is bound at residue Asp600. Glu606 lines the 5-methyltetrahydropteroyltri-L-glutamate pocket. Positions 642, 644, and 666 each coordinate Zn(2+). His695 acts as the Proton donor in catalysis. Cys727 is a binding site for Zn(2+).

Belongs to the vitamin-B12 independent methionine synthase family. Zn(2+) serves as cofactor.

The catalysed reaction is 5-methyltetrahydropteroyltri-L-glutamate + L-homocysteine = tetrahydropteroyltri-L-glutamate + L-methionine. It participates in amino-acid biosynthesis; L-methionine biosynthesis via de novo pathway; L-methionine from L-homocysteine (MetE route): step 1/1. Functionally, catalyzes the transfer of a methyl group from 5-methyltetrahydrofolate to homocysteine resulting in methionine formation. This is 5-methyltetrahydropteroyltriglutamate--homocysteine methyltransferase from Cupriavidus necator (Alcaligenes eutrophus).